A 310-amino-acid chain; its full sequence is tRNA-cytidine(32) 2-sulfurtransferase (310 aa).

A PP-loop motif motif is present at residues 45–50 (SGGKDS). [4Fe-4S] cluster is bound by residues Cys120, Cys123, and Cys211.

It belongs to the TtcA family. In terms of assembly, homodimer. Mg(2+) serves as cofactor. It depends on [4Fe-4S] cluster as a cofactor.

It is found in the cytoplasm. It carries out the reaction cytidine(32) in tRNA + S-sulfanyl-L-cysteinyl-[cysteine desulfurase] + AH2 + ATP = 2-thiocytidine(32) in tRNA + L-cysteinyl-[cysteine desulfurase] + A + AMP + diphosphate + H(+). The protein operates within tRNA modification. In terms of biological role, catalyzes the ATP-dependent 2-thiolation of cytidine in position 32 of tRNA, to form 2-thiocytidine (s(2)C32). The sulfur atoms are provided by the cysteine/cysteine desulfurase (IscS) system. The protein is tRNA-cytidine(32) 2-sulfurtransferase of Shewanella putrefaciens (strain CN-32 / ATCC BAA-453).